We begin with the raw amino-acid sequence, 985 residues long: Vacuolar membrane protease (985 aa).

Residues 1–20 lie on the Cytoplasmic side of the membrane; that stretch reads MASSRAQRFNPIAFTPWPVT. Residues 21–41 form a helical membrane-spanning segment; that stretch reads CITTIVYLALLIPILVINLVV. Residues 42–388 lie on the Vacuolar side of the membrane; that stretch reads PSAPETNPKG…MFGTAFAVFR (347 aa). 3 N-linked (GlcNAc...) asparagine glycosylation sites follow: N53, N116, and N119. Positions 175 and 187 each coordinate Zn(2+). E221 (proton acceptor) is an active-site residue. Position 222 (E222) interacts with Zn(2+). The N-linked (GlcNAc...) asparagine glycan is linked to N238. E247 and H320 together coordinate Zn(2+). Residues 389–409 form a helical membrane-spanning segment; sequence LHTLFAISVALLVIAPLVIFV. Over 410 to 440 the chain is Cytoplasmic; it reads TNRMYLFSMSKSLEGTGDQVSLRGLRGFSRT. Residues 441–461 traverse the membrane as a helical segment; that stretch reads PIILVTATTIPICLAYLLEKV. At 462–470 the chain is on the vacuolar side; the sequence is NPYIVHSSQ. The helical transmembrane segment at 471-491 threads the bilayer; sequence FSVWSMMFSAWIFLAWFLACA. Residues 492-502 lie on the Cytoplasmic side of the membrane; that stretch reads ADFFRPSALHR. Residues 503 to 523 traverse the membrane as a helical segment; it reads AYSYTWIFIATWIMLVINTVY. At 524-527 the chain is on the vacuolar side; it reads ANQK. A helical transmembrane segment spans residues 528 to 548; the sequence is GIAAGYFLLFYFAGAFLATWI. Residues 549–666 lie on the Cytoplasmic side of the membrane; sequence SYLELFALPR…TLPRWTWVLQ (118 aa). Residues 563 to 612 are disordered; it reads ARQTTGRRPSSLSSRLLTSSADELRSNASPSTAEFPGAAGEDTDPTESTS. Residues 566–582 show a composition bias toward low complexity; it reads TTGRRPSSLSSRLLTSS. Residues 667-687 form a helical membrane-spanning segment; it reads LLLLAPIVLILVGQLALFLTA. At 688-700 the chain is on the vacuolar side; it reads SMCQVGSDGVSTF. A helical transmembrane segment spans residues 701-721; the sequence is VVYLACAVFTTLLCIPLFPLI. The Cytoplasmic segment spans residues 722–727; the sequence is HRFTYH. A helical transmembrane segment spans residues 728–748; sequence IPTFLFLVFIGTLIYNLVAFP. At 749–985 the chain is on the vacuolar side; it reads FSPANRLKTF…VEASHSFTIQ (237 aa). N-linked (GlcNAc...) asparagine glycosylation is found at N767, N795, and N839.

It belongs to the peptidase M28 family. Requires Zn(2+) as cofactor.

The protein resides in the vacuole membrane. In terms of biological role, may be involved in vacuolar sorting and osmoregulation. The chain is Vacuolar membrane protease from Ajellomyces capsulatus (strain G186AR / H82 / ATCC MYA-2454 / RMSCC 2432) (Darling's disease fungus).